Consider the following 516-residue polypeptide: mRNA export factor ICP27 homolog (516 aa).

The Zn(2+) site is built by Cys-231, His-336, Cys-338, and Cys-343. The segment at 231-343 adopts a CHC2-type zinc-finger fold; it reads CVFNDNGHGD…SNHKCDDVSC (113 aa). Positions 399 to 409 are enriched in polar residues; sequence YSTSRDLPQTS. Residues 399 to 423 are disordered; that stretch reads YSTSRDLPQTSHRSHKNQGTPKVKS.

The protein belongs to the HHV-1 ICP27 protein family.

The protein localises to the virion tegument. It localises to the virion. The protein resides in the host nucleus. It is found in the host cytoplasm. Functionally, immediate early (EI) protein that plays many roles during productive infection including regulation of viral gene expression and nuclear export of intronless viral RNAs. The polypeptide is mRNA export factor ICP27 homolog (Homo sapiens (Human)).